A 115-amino-acid chain; its full sequence is Virulence-associated protein A' (115 aa).

Residues I16–F70 enclose the HTH cro/C1-type domain. Residues I27–N46 constitute a DNA-binding region (H-T-H motif).

It belongs to the VapA/VapI family.

This chain is Virulence-associated protein A' (vapA'), found in Dichelobacter nodosus (Bacteroides nodosus).